The following is a 162-amino-acid chain: Endoribonuclease YbeY (162 aa).

3 residues coordinate Zn(2+): His-118, His-122, and His-128.

Belongs to the endoribonuclease YbeY family. The cofactor is Zn(2+).

The protein resides in the cytoplasm. Single strand-specific metallo-endoribonuclease involved in late-stage 70S ribosome quality control and in maturation of the 3' terminus of the 16S rRNA. This chain is Endoribonuclease YbeY, found in Caulobacter sp. (strain K31).